We begin with the raw amino-acid sequence, 264 residues long: 3-methyl-2-oxobutanoate hydroxymethyltransferase (264 aa).

Positions 45 and 84 each coordinate Mg(2+). 3-methyl-2-oxobutanoate-binding positions include 45–46 (DS), Asp84, and Lys112. Residue Glu114 participates in Mg(2+) binding. Catalysis depends on Glu181, which acts as the Proton acceptor.

Belongs to the PanB family. Homodecamer; pentamer of dimers. Mg(2+) serves as cofactor.

The protein localises to the cytoplasm. The enzyme catalyses 3-methyl-2-oxobutanoate + (6R)-5,10-methylene-5,6,7,8-tetrahydrofolate + H2O = 2-dehydropantoate + (6S)-5,6,7,8-tetrahydrofolate. Its pathway is cofactor biosynthesis; (R)-pantothenate biosynthesis; (R)-pantoate from 3-methyl-2-oxobutanoate: step 1/2. Its function is as follows. Catalyzes the reversible reaction in which hydroxymethyl group from 5,10-methylenetetrahydrofolate is transferred onto alpha-ketoisovalerate to form ketopantoate. The sequence is that of 3-methyl-2-oxobutanoate hydroxymethyltransferase from Escherichia coli O157:H7.